Reading from the N-terminus, the 377-residue chain is UPF0754 membrane protein GK0639 (377 aa).

Transmembrane regions (helical) follow at residues Leu-7–Val-27 and Tyr-357–Leu-377.

The protein belongs to the UPF0754 family.

It localises to the cell membrane. This Geobacillus kaustophilus (strain HTA426) protein is UPF0754 membrane protein GK0639.